The chain runs to 159 residues: Protransforming growth factor alpha (159 aa).

An N-terminal signal peptide occupies residues 1–23; it reads MVPAAGQLALLALGILVAVCQAL. Positions 24–38 are cleaved as a propeptide — removed in mature form; sequence ENSTSPLSDSPVAAA. Over 24–97 the chain is Extracellular; sequence ENSTSPLSDS…AVVAASQKKQ (74 aa). Residue asparagine 25 is glycosylated (N-linked (GlcNAc...) asparagine). The region spanning 42–82 is the EGF-like domain; the sequence is HFNKCPDSHTQYCFHGTCRFLVQEEKPACVCHSGYVGVRCE. Intrachain disulfides connect cysteine 46/cysteine 59, cysteine 54/cysteine 70, and cysteine 72/cysteine 81. The propeptide at 89–159 is removed in mature form; sequence VVAASQKKQA…TACCHSETVV (71 aa). A helical membrane pass occupies residues 98 to 123; that stretch reads AITALVVVSIVALAVLIITCVLIHCC. The Cytoplasmic portion of the chain corresponds to 124 to 159; that stretch reads QVRKHCEWCRALVCRHEKPSALLKGRTACCHSETVV. 2 S-palmitoyl cysteine lipidation sites follow: cysteine 152 and cysteine 153.

In terms of assembly, interacts with the PDZ domains of MAGI3, SDCBP and SNTA1. The interaction with SDCBP, is required for the targeting to the cell surface. In the endoplasmic reticulum, in its immature form (i.e. with a prosegment and lacking full N-glycosylation), interacts with CNIH. In the Golgi apparatus, may form a complex with CNIH and GORASP2. Interacts (via cytoplasmic C-terminal domain) with NKD2.

It localises to the secreted. It is found in the extracellular space. The protein resides in the cell membrane. TGF alpha is a mitogenic polypeptide that is able to bind to the EGF receptor/EGFR and to act synergistically with TGF beta to promote anchorage-independent cell proliferation in soft agar. The chain is Protransforming growth factor alpha (Tgfa) from Rattus norvegicus (Rat).